Here is a 589-residue protein sequence, read N- to C-terminus: F-box only protein 24 (589 aa).

The F-box domain occupies 23–69 (PISVQLFPPELVEHIVSFLPVKDLVALGQTCHYFHEVCDAEGVWRRI). The RCC1 repeat unit spans residues 386–435 (GRIFMQGNNRYGQLGTGDKMDRGEPTQVHYLQRPIALWCGLNHSLVLSQT). The interval 506–526 (VGGSPEPSQGAGAPQDPGGTA) is disordered.

Directly interacts with SKP1 and CUL1.

Substrate-recognition component of the SCF (SKP1-CUL1-F-box protein)-type E3 ubiquitin ligase complex. The chain is F-box only protein 24 (Fbxo24) from Mus musculus (Mouse).